A 134-amino-acid chain; its full sequence is Profilin-4 (134 aa).

Cysteines 13 and 118 form a disulfide. An Involved in PIP2 interaction motif is present at residues Ala-84–Thr-100. Thr-114 carries the post-translational modification Phosphothreonine.

This sequence belongs to the profilin family. Occurs in many kinds of cells as a complex with monomeric actin in a 1:1 ratio. Post-translationally, phosphorylated by MAP kinases.

Its subcellular location is the cytoplasm. It is found in the cytoskeleton. Its function is as follows. Binds to actin and affects the structure of the cytoskeleton. At high concentrations, profilin prevents the polymerization of actin, whereas it enhances it at low concentrations. The sequence is that of Profilin-4 from Olea europaea (Common olive).